Here is a 407-residue protein sequence, read N- to C-terminus: MGEFNEYDDIDDFFCNDISPLHDEADEFGSTDIALPSQLYGKGPKPRAGESKALRDRNKESGSGTESEAKGDTLATKRGRSSWRRGASESSRSSSLGSSSPSDSSSGRSLSPVRPAKRKRTDEQQPESEANRFLAEMERDIELSAGPGGGETATGKGGRDTDARVYNVGFISRIEGSRNRRVNVKVTGQKQFATFLAIALAAFSKQHNIRKSLKPKYQADQVKIYREGVEVFKFMTCDSFNIEEPYNASATDIEVYIVPVDEATAFEQEWKRKFEERVRMLSNSSFLEVMDDIEDDNDDFLVNEYEKALVNARSLNETELAVREGTPADESSQLLKIVLLGSDNKKVFIHVRPTTTLLKVAEHYRVAKELPPTVQLSLMFDHEEIDLDDTICNIDIEDGDIIEVVVK.

Residues 19 to 130 form a disordered region; the sequence is SPLHDEADEF…TDEQQPESEA (112 aa). Positions 47-60 are enriched in basic and acidic residues; that stretch reads RAGESKALRDRNKE. Residues 84 to 111 are compositionally biased toward low complexity; that stretch reads RRGASESSRSSSLGSSSPSDSSSGRSLS. SUMO-like region repeat units lie at residues 129-253 and 334-407; these read EANR…ATDI and LLKI…VVVK.

As to quaternary structure, component of a cullin-RING ligase (CRL)-like complex composed of at least the cullin RTT101, a linker protein MMS1, and the potential substrate receptor ESC2.

The protein localises to the cytoplasm. The protein resides in the nucleus. May be a substrate targeting component of a cullin-RING-based E3 ubiquitin-protein ligase complex RTT101(MMS1-ESC2). Involved in HMR and telomere silencing via the recruitment or stabilizing of the SIR (silent information regulators) complex. This is Protein ESC2 (ESC2) from Eremothecium gossypii (strain ATCC 10895 / CBS 109.51 / FGSC 9923 / NRRL Y-1056) (Yeast).